The chain runs to 569 residues: MKVVATILYLVVLAICGLGIHGAHPTHSAPPTVYPSVSFNLTEANSNEYRHFLQELRGKVILGSHRAFDLPVLNPESKVSDSDRFVLVRLTNPSRKKVTLAIDVVTFYVVAFAQNDRSYFFSGSSEVQRENLFVDTTQEDLNFKGDYTSLEHQVGFGRVYIPLGPKSLAQSISSLSTYKSSAGDNKRLARSLLVVIQMVSEAARFRYIQLRIQASITDAKEFTPDLLMLSMENKWSSMSSEIQQAQPGGAFAQVVKLLDQRNHPIDVTNFRRLFQLTSVAVLLHGCPTVTKMPAYIIKMPVFNGGEDEERCSVVEEVTRRIGGRDGFCAEVKNGDEKDGTPVQLSSCGEQSNQQWTFSTDGTIQSLGKCLTTSSSVMIYNCKVVPPESTKWVVSIDGTITNPRSGLVLTAPKAAEGTLVSLEKNVHAARQGWIVGNVEPLVTFIVGYEQMCLETNPGNNDVSLGDCSVKSASKVDQKWALYGDGTIRVNNDRSLCVTSEGKSSNEPIIILKCLGWANQRWVFNTDGTISNPDSKLVMHVDQNDVPLRKIILSHPSGTSNQQWIASTHPA.

An N-terminal signal peptide occupies residues 1 to 28 (MKVVATILYLVVLAICGLGIHGAHPTHS). Residue Asn-40 is glycosylated (N-linked (GlcNAc...) asparagine). Glu-201 is an active-site residue. Intrachain disulfides connect Cys-286-Cys-311, Cys-328-Cys-347, and Cys-369-Cys-381. Ricin B-type lectin domains lie at 315–435 (EEVT…WIVG) and 437–565 (VEPL…WIAS). A 1-alpha repeat occupies 325–365 (DGFCAEVKNGDEKDGTPVQLSSCGEQSNQQWTFSTDGTIQS). Residues 366-401 (LGKCLTTSSSVMIYNCKVVPPESTKWVVSIDGTITN) form a 1-beta repeat. The stretch at 404-436 (SGLVLTAPKAAEGTLVSLEKNVHAARQGWIVGN) is one 1-gamma repeat. One copy of the 2-alpha repeat lies at 448–488 (EQMCLETNPGNNDVSLGDCSVKSASKVDQKWALYGDGTIRV). 2 cysteine pairs are disulfide-bonded: Cys-451/Cys-466 and Cys-495/Cys-512. The stretch at 492–530 (RSLCVTSEGKSSNEPIIILKCLGWANQRWVFNTDGTISN) is one 2-beta repeat. A 2-gamma repeat occupies 533 to 566 (SKLVMHVDQNDVPLRKIILSHPSGTSNQQWIAST).

It in the N-terminal section; belongs to the ribosome-inactivating protein family. Type 2 RIP subfamily. Disulfide-linked dimer of A and B chains.

It catalyses the reaction Endohydrolysis of the N-glycosidic bond at one specific adenosine on the 28S rRNA.. In terms of biological role, the A chain is responsible for inhibiting protein synthesis through the catalytic inactivation of 60S ribosomal subunits by removing adenine from position 4,324 of 28S rRNA. The B chain binds to cell receptors and probably facilitates the entry into the cell of the A chain; B chains are also responsible for cell agglutination (lectin activity). Agglutination is inhibited by Neu5Ac(alpha2,6)lactose, and N-linked glycoproteins such as fetuin and orosomucoid. This Sambucus nigra (European elder) protein is Ribosome-inactivating protein SNAI'.